We begin with the raw amino-acid sequence, 107 residues long: Small integral membrane protein 19 (107 aa).

A helical membrane pass occupies residues 25 to 43; that stretch reads ATNVYLIVILVSFGLFMYA. Positions 88 to 107 are disordered; the sequence is RKYEYQQPQSQADSVQLSLE. Positions 93-107 are enriched in polar residues; it reads QQPQSQADSVQLSLE.

The protein belongs to the SMIM19 family.

Its subcellular location is the membrane. The polypeptide is Small integral membrane protein 19 (Smim19) (Mus musculus (Mouse)).